The primary structure comprises 74 residues: MFLIYLLVQTAESSWLSKTAKKLENSAKKRISEGIAIAIKGGSRRRRSVGEEDAIPSHIEVNKFFLRKPAKEHI.

Residues 1-13 form the signal peptide; the sequence is MFLIYLLVQTAES. The propeptide at 45–74 is removed in mature form; sequence RRRSVGEEDAIPSHIEVNKFFLRKPAKEHI.

It belongs to the cecropin family. Expressed in the body wall, intestine, uterus and ovary.

It is found in the secreted. Has antibacterial activity against several Gram-positive and Gram-negative bacteria. Is weakly active against yeasts. Acts by a nonpore mechanism. In Ascaris suum (Pig roundworm), this protein is Cecropin-P3 (ASCEC-3).